We begin with the raw amino-acid sequence, 611 residues long: Probable Xaa-Pro aminopeptidase P (611 aa).

Mn(2+) contacts are provided by D408, D419, E517, and E531.

It belongs to the peptidase M24B family. Requires Mn(2+) as cofactor.

The enzyme catalyses Release of any N-terminal amino acid, including proline, that is linked to proline, even from a dipeptide or tripeptide.. Functionally, catalyzes the removal of a penultimate prolyl residue from the N-termini of peptides. The sequence is that of Probable Xaa-Pro aminopeptidase P (AMPP) from Coccidioides posadasii (strain RMSCC 757 / Silveira) (Valley fever fungus).